The sequence spans 92 residues: Small ribosomal subunit protein uS19c (92 aa).

This sequence belongs to the universal ribosomal protein uS19 family.

The protein localises to the plastid. It localises to the chloroplast. In terms of biological role, protein S19 forms a complex with S13 that binds strongly to the 16S ribosomal RNA. The polypeptide is Small ribosomal subunit protein uS19c (Huperzia lucidula (Shining clubmoss)).